A 550-amino-acid chain; its full sequence is Chaperonin GroEL (550 aa).

ATP contacts are provided by residues 30 to 33 (TLGP), lysine 51, 87 to 91 (DGTTT), glycine 415, 479 to 481 (NAA), and aspartate 495.

This sequence belongs to the chaperonin (HSP60) family. In terms of assembly, forms a cylinder of 14 subunits composed of two heptameric rings stacked back-to-back. Interacts with the co-chaperonin GroES.

It is found in the cytoplasm. It carries out the reaction ATP + H2O + a folded polypeptide = ADP + phosphate + an unfolded polypeptide.. Functionally, together with its co-chaperonin GroES, plays an essential role in assisting protein folding. The GroEL-GroES system forms a nano-cage that allows encapsulation of the non-native substrate proteins and provides a physical environment optimized to promote and accelerate protein folding. The sequence is that of Chaperonin GroEL from Aromatoleum aromaticum (strain DSM 19018 / LMG 30748 / EbN1) (Azoarcus sp. (strain EbN1)).